A 285-amino-acid chain; its full sequence is Pantothenate synthetase (285 aa).

32–39 (MGALHDGH) is an ATP binding site. Histidine 39 (proton donor) is an active-site residue. Glutamine 63 lines the (R)-pantoate pocket. Glutamine 63 is a binding site for beta-alanine. 149–152 (GEKD) serves as a coordination point for ATP. Glutamine 155 provides a ligand contact to (R)-pantoate. ATP is bound by residues valine 178 and 186-189 (MSSR).

It belongs to the pantothenate synthetase family. As to quaternary structure, homodimer.

The protein localises to the cytoplasm. The catalysed reaction is (R)-pantoate + beta-alanine + ATP = (R)-pantothenate + AMP + diphosphate + H(+). It functions in the pathway cofactor biosynthesis; (R)-pantothenate biosynthesis; (R)-pantothenate from (R)-pantoate and beta-alanine: step 1/1. Catalyzes the condensation of pantoate with beta-alanine in an ATP-dependent reaction via a pantoyl-adenylate intermediate. This chain is Pantothenate synthetase, found in Ruegeria pomeroyi (strain ATCC 700808 / DSM 15171 / DSS-3) (Silicibacter pomeroyi).